The sequence spans 1044 residues: MPGIVVFRRRWSVGSDDLVLPAIFLFLLHTTWFVILSVVLFGLVYNPHEACSLNLVDHGRGYLGILLSCMIAEMAIIWLSMRGGILYTEPRDSMQYVLYVRLAILVIEFIYAIVGIVWLTQYYTSCNDLTAKNVTLGMVVCNWVVILSVCITVLCVFDPTGRTFVKLRATKRRQRNLRTYNLRHRLEEGQATSWSRRLKVFLCCTRTKDSQSDAYSEIAYLFAEFFRDLDIVPSDIIAGLVLLRQRQRAKRNAVLDEANNDILAFLSGMPVTRNTKYLDLKNSHEMLRYKEVCYYMLFALAAYGWPMYLMRKPTCGLCQLARSCSCCLCPARPRFAPGVTIEEDNCCGCNAIAIRRHFLDENMTAVDIVYTSCHDAVYETPFYVAVDHDKKKVVISIRGTLSPKDALTDLTGDAERLPVEGHRGTWLGHKGMVLSAEYIKKKLEQEMVLSQAFGRDLGRGTKHYGLIVVGHSLGAGTAAILSFLLRPQYPTLKCFAYSPPGGLLSEDAMEYSKEFVTAVVLGKDLVPRIGLSQLEGFRRQLLDVLQRSTKPKWRIIVGATKCIPKSELPEDQVEVTALASTRLWTHPSDLTIALSASTPLYPPGRIIHVVHNHPAEQCCCCEQEEPTYFAIWGDNKAFNEVIISPAMLHEHLPYVVMEGLNKVLENYNKGKTALLSAAKVMVSPTEVDLTPELIFQQQPLPTGPPLPTGLALELPATEHRNSSVRSKSQSEMSLEGFSEGRLLSPVAAASAARQDPVELLLLSTQERLAAELQSRRAPLATMESLSDTESLYSFDSRRSSGFRSIRGSPSLHAVLERDEGHLFYIDPAIPEENPSLSSRTELLAADSLSKHSQDTQPLEAALGSGGVTPERPPSAANDEEEAAGGSEGGGVAPRGELALHNGRLGDSPSPQVLEFAEFIDSLFNLDSKSSSFQDLYCMMVPESPTSDYTEGPKSPSQQEILLRAQFEPNLVPKPPRLFAGSAEPSSGISLSPSFPLSSSGELMDLTPTGLSSQECLATDKIRTSTPTGHGASPTKQDDLVISAR.

The Cytoplasmic portion of the chain corresponds to 1–22 (MPGIVVFRRRWSVGSDDLVLPA). Residues 23-43 (IFLFLLHTTWFVILSVVLFGL) traverse the membrane as a helical segment. At 44–60 (VYNPHEACSLNLVDHGR) the chain is on the extracellular side. The helical transmembrane segment at 61–81 (GYLGILLSCMIAEMAIIWLSM) threads the bilayer. Residues 82-101 (RGGILYTEPRDSMQYVLYVR) lie on the Cytoplasmic side of the membrane. A helical transmembrane segment spans residues 102–122 (LAILVIEFIYAIVGIVWLTQY). At 123 to 136 (YTSCNDLTAKNVTL) the chain is on the extracellular side. Asn-133 carries an N-linked (GlcNAc...) asparagine glycan. Residues 137–157 (GMVVCNWVVILSVCITVLCVF) form a helical membrane-spanning segment. The Cytoplasmic segment spans residues 158 to 1044 (DPTGRTFVKL…KQDDLVISAR (887 aa)). Active-site charge relay system residues include Ser-472 and Asp-524. Ser-728, Ser-730, Ser-733, Ser-744, Ser-784, Ser-786, Ser-808, Ser-810, Ser-835, Ser-849, and Ser-954 each carry phosphoserine. The disordered stretch occupies residues 848-905 (LSKHSQDTQPLEAALGSGGVTPERPPSAANDEEEAAGGSEGGGVAPRGELALHNGRLG). Residues 1013-1044 (QECLATDKIRTSTPTGHGASPTKQDDLVISAR) are disordered. Thr-1025 bears the Phosphothreonine mark.

The protein belongs to the AB hydrolase superfamily. Lipase family. Interacts (via C-terminal) with CAMK2A; leading to the phosphorylation and inhibition of DAGLA enzymatic activity. Interacts (via PPXXF motif) with HOMER1 and HOMER2; this interaction is required for DAGLA membrane localization. The cofactor is Ca(2+). Post-translationally, phosphorylated at Ser-784 and Ser-810 by CAMK2A; phosphorylation by CAMK2A inhibits diacylglycerol lipase activity.

The protein localises to the cell membrane. It is found in the cell projection. It localises to the dendritic spine membrane. Its subcellular location is the postsynaptic density membrane. The protein resides in the early endosome membrane. It carries out the reaction a 1,2-diacyl-sn-glycerol + H2O = a 2-acylglycerol + a fatty acid + H(+). It catalyses the reaction 1-octadecanoyl-2-(5Z,8Z,11Z,14Z-eicosatetraenoyl)-sn-glycerol + H2O = 2-(5Z,8Z,11Z,14Z-eicosatetraenoyl)-glycerol + octadecanoate + H(+). The enzyme catalyses 1,2-di-(9Z-octadecenoyl)-sn-glycerol + H2O = 2-(9Z-octadecenoyl)-glycerol + (9Z)-octadecenoate + H(+). The catalysed reaction is 1-(9Z-octadecenoyl)-2-(5Z,8Z,11Z,14Z-eicosatetraenoyl)-sn-glycerol + H2O = 2-(5Z,8Z,11Z,14Z-eicosatetraenoyl)-glycerol + (9Z)-octadecenoate + H(+). It carries out the reaction 1-(9Z-octadecenoyl)-2-octadecanoyl-sn-glycerol + H2O = 2-octadecanoylglycerol + (9Z)-octadecenoate + H(+). It catalyses the reaction 1-(9Z-octadecenoyl)-2-(9Z,12Z-octadecadienoyl)-sn-glycerol + H2O = 2-(9Z,12Z-octadecadienoyl)-glycerol + (9Z)-octadecenoate + H(+). The enzyme catalyses 1-(9Z-octadecenoyl)-2-O-(5Z,8Z,11Z,14Z-eicosatetraenyl)-sn-glycerol + H2O = 2-O-(5Z,8Z,11Z,14Z)-eicosatetraenylglycerol + (9Z)-octadecenoate + H(+). Inhibited by 1,2,3-triazole urea covalent inhibitors KT172, DH376 and DO34. Inhibited by p-hydroxy-mercuri-benzoate and HgCl(2), but not to PMSF. Also inhibited by RHC80267. Diacylglycerol lipase activity is inhibited by the phosphorylation of Ser-784 and Ser-810 by CAMK2A. Its function is as follows. Serine hydrolase that hydrolyzes arachidonic acid-esterified diacylglycerols (DAGs) to produce the principal endocannabinoid, 2-arachidonoylglycerol (2-AG). Preferentially hydrolyzes sn-1 fatty acids from diacylglycerols (DAG) that contain arachidonic acid (AA) esterified at the sn-2 position to biosynthesize 2-AG. Has negligible activity against other lipids including monoacylglycerols and phospholipids. Plays a key role in regulating 2-AG signaling in the CNS. Controls the activity of 2-AG as a retrograde messenger at neuronal synapses. Supports axonal growth during development and adult neurogenesis. Plays a role for eCB signaling in the physiological regulation of anxiety and depressive behaviors. Also regulates neuroinflammatory responses in the brain, in particular, LPS-induced microglial activation. This Rattus norvegicus (Rat) protein is Diacylglycerol lipase-alpha (Dagla).